Reading from the N-terminus, the 444-residue chain is Tol-Pal system protein TolB (444 aa).

A signal peptide spans 1-19; the sequence is MRNIIYFILSLLFSVTSYA.

The protein belongs to the TolB family. In terms of assembly, the Tol-Pal system is composed of five core proteins: the inner membrane proteins TolA, TolQ and TolR, the periplasmic protein TolB and the outer membrane protein Pal. They form a network linking the inner and outer membranes and the peptidoglycan layer.

The protein resides in the periplasm. In terms of biological role, part of the Tol-Pal system, which plays a role in outer membrane invagination during cell division and is important for maintaining outer membrane integrity. The sequence is that of Tol-Pal system protein TolB from Rickettsia peacockii (strain Rustic).